Here is a 503-residue protein sequence, read N- to C-terminus: Glucose-6-phosphate 1-dehydrogenase (503 aa).

NADP(+) is bound by residues 14–21 (GASGDLSK), arginine 49, and lysine 158. Residues lysine 158, 188–192 (HYLGK), glutamate 226, and aspartate 245 each bind D-glucose 6-phosphate. The active-site Proton acceptor is histidine 250. Residue lysine 341 coordinates NADP(+). Lysine 344 contacts D-glucose 6-phosphate. Positions 350, 354, and 376 each coordinate NADP(+). Glutamine 378 is a binding site for D-glucose 6-phosphate. Residues 384 to 386 (YLK), arginine 471, and tyrosine 487 contribute to the NADP(+) site.

The protein belongs to the glucose-6-phosphate dehydrogenase family.

It catalyses the reaction D-glucose 6-phosphate + NADP(+) = 6-phospho-D-glucono-1,5-lactone + NADPH + H(+). The protein operates within carbohydrate degradation; pentose phosphate pathway; D-ribulose 5-phosphate from D-glucose 6-phosphate (oxidative stage): step 1/3. In terms of biological role, catalyzes the rate-limiting step of the oxidative pentose-phosphate pathway, which represents a route for the dissimilation of carbohydrates besides glycolysis. The main function of this enzyme is to provide reducing power (NADPH) and pentose phosphates for fatty acid and nucleic acid synthesis. The G6PDH activity is required to cope with hydrogen peroxide and potassium bisulfite stresses and plays a role in adaptation to conditions used in wine fermentations. This Hanseniaspora uvarum (Yeast) protein is Glucose-6-phosphate 1-dehydrogenase.